The following is a 145-amino-acid chain: Small t antigen (145 aa).

One can recognise a J domain in the interval 6–82 (RLTELLCLPV…PEESGYATFE (77 aa)). A disordered region spans residues 58-80 (EGLRADETLEDSDPEPEESGYAT). Positions 65–75 (TLEDSDPEPEE) are enriched in acidic residues.

As to quaternary structure, interacts with host PPP2R1A; the interaction inhibits PP2A activity.

It is found in the host cytoplasm. The protein resides in the host nucleus. Functionally, promotes efficient viral genome replication by accelerating both G1 and S phase progression of the cell cycle. This is Small t antigen from Budgerigar fledgling disease virus (BFPyV).